A 190-amino-acid polypeptide reads, in one-letter code: Succinate dehydrogenase assembly factor 2, mitochondrial (190 aa).

The protein belongs to the SDHAF2 family. As to quaternary structure, interacts with the flavoprotein subunit within the SDH catalytic dimer.

Its subcellular location is the mitochondrion matrix. In terms of biological role, plays an essential role in the assembly of succinate dehydrogenase (SDH), an enzyme complex (also referred to as respiratory complex II) that is a component of both the tricarboxylic acid (TCA) cycle and the mitochondrial electron transport chain, and which couples the oxidation of succinate to fumarate with the reduction of ubiquinone (coenzyme Q) to ubiquinol. Required for flavinylation (covalent attachment of FAD) of the flavoprotein subunit of the SDH catalytic dimer. The chain is Succinate dehydrogenase assembly factor 2, mitochondrial from Komagataella phaffii (strain GS115 / ATCC 20864) (Yeast).